The primary structure comprises 229 residues: Large ribosomal subunit protein uL1 (229 aa).

It belongs to the universal ribosomal protein uL1 family. Part of the 50S ribosomal subunit.

Functionally, binds directly to 23S rRNA. The L1 stalk is quite mobile in the ribosome, and is involved in E site tRNA release. In terms of biological role, protein L1 is also a translational repressor protein, it controls the translation of the L11 operon by binding to its mRNA. This chain is Large ribosomal subunit protein uL1, found in Histophilus somni (strain 129Pt) (Haemophilus somnus).